We begin with the raw amino-acid sequence, 1017 residues long: Integrator complex subunit 3 (1017 aa).

The tract at residues Glu952–Asp1017 is disordered. Residues Asn983–Asp997 are compositionally biased toward acidic residues.

This sequence belongs to the Integrator subunit 3 family. In terms of assembly, component of the Integrator complex, composed of core subunits INTS1, INTS2, INTS3, INTS4, INTS5, INTS6, INTS7, INTS8, INTS9/RC74, INTS10, INTS11/CPSF3L, INTS12, INTS13, INTS14 and INTS15. The core complex associates with protein phosphatase 2A subunits PPP2CA and PPP2R1A, to form the Integrator-PP2A (INTAC) complex. Component of the SOSS complex.

It localises to the nucleus. It is found in the cytoplasm. Component of the integrator complex, a multiprotein complex that terminates RNA polymerase II (Pol II) transcription in the promoter-proximal region of genes. The integrator complex provides a quality checkpoint during transcription elongation by driving premature transcription termination of transcripts that are unfavorably configured for transcriptional elongation: the complex terminates transcription by (1) catalyzing dephosphorylation of the C-terminal domain (CTD) of Pol II subunit POLR2A/RPB1 and SUPT5H/SPT5, (2) degrading the exiting nascent RNA transcript via endonuclease activity and (3) promoting the release of Pol II from bound DNA. The integrator complex is also involved in terminating the synthesis of non-coding Pol II transcripts, such as enhancer RNAs (eRNAs), small nuclear RNAs (snRNAs), telomerase RNAs and long non-coding RNAs (lncRNAs). Within the integrator complex, INTS3 is involved in the post-termination step: INTS3 binds INTS7 in the open conformation of integrator complex and prevents the rebinding of Pol II to the integrator after termination cycle. Its function is as follows. Component of the SOSS complex, a multiprotein complex that functions downstream of the MRN complex to promote DNA repair and G2/M checkpoint. The SOSS complex associates with single-stranded DNA at DNA lesions and influences diverse endpoints in the cellular DNA damage response including cell-cycle checkpoint activation, recombinational repair and maintenance of genomic stability. The SOSS complex is required for efficient homologous recombination-dependent repair of double-strand breaks (DSBs) and ATM-dependent signaling pathways. In the SOSS complex, it is required for the assembly of the complex and for stabilization of the complex at DNA damage sites. In Danio rerio (Zebrafish), this protein is Integrator complex subunit 3 (ints3).